Reading from the N-terminus, the 74-residue chain is Small ribosomal subunit protein bS18 (74 aa).

This sequence belongs to the bacterial ribosomal protein bS18 family. As to quaternary structure, part of the 30S ribosomal subunit. Forms a tight heterodimer with protein bS6.

In terms of biological role, binds as a heterodimer with protein bS6 to the central domain of the 16S rRNA, where it helps stabilize the platform of the 30S subunit. The chain is Small ribosomal subunit protein bS18 from Thioalkalivibrio sulfidiphilus (strain HL-EbGR7).